A 270-amino-acid polypeptide reads, in one-letter code: Non-structural maintenance of chromosomes element 1 homolog (270 aa).

Residues 185–226 (CNVCRKVAIQSQLCENCGIPLHLQCAGKYFHGKANPTCPNCN) form an RING-type; atypical zinc finger. A disordered region spans residues 236–270 (LNQVSSQGPSHSQTETVRGRNQRSKNTSTASRTSR). Polar residues-rich tracts occupy residues 237-251 (NQVSSQGPSHSQTET) and 259-270 (SKNTSTASRTSR).

This sequence belongs to the NSE1 family. Component of the SMC5-SMC6 complex.

The protein resides in the nucleus. It is found in the chromosome. The protein localises to the telomere. It carries out the reaction S-ubiquitinyl-[E2 ubiquitin-conjugating enzyme]-L-cysteine + [acceptor protein]-L-lysine = [E2 ubiquitin-conjugating enzyme]-L-cysteine + N(6)-ubiquitinyl-[acceptor protein]-L-lysine.. Functionally, RING-type zinc finger-containing E3 ubiquitin ligase that assembles with melanoma antigen protein (MAGE) to catalyze the direct transfer of ubiquitin from E2 ubiquitin-conjugating enzyme to a specific substrate. Within MAGE-RING ubiquitin ligase complex, MAGE stimulates and specifies ubiquitin ligase activity likely through recruitment and/or stabilization of the E2 ubiquitin-conjugating enzyme at the E3:substrate complex. Involved in maintenance of genome integrity, DNA damage response and DNA repair. In Xenopus laevis (African clawed frog), this protein is Non-structural maintenance of chromosomes element 1 homolog (nsmce1).